The chain runs to 226 residues: Phosphoglycolate phosphatase (226 aa).

D5 serves as the catalytic Nucleophile. 2 residues coordinate Mg(2+): D5 and D7. A substrate-binding site is contributed by K142. Mg(2+) is bound by residues D164 and D168.

The protein belongs to the archaeal SPP-like hydrolase family. Mg(2+) is required as a cofactor.

It carries out the reaction 2-phosphoglycolate + H2O = glycolate + phosphate. In terms of biological role, catalyzes the dephosphorylation of 2-phosphoglycolate. This Sulfurisphaera tokodaii (strain DSM 16993 / JCM 10545 / NBRC 100140 / 7) (Sulfolobus tokodaii) protein is Phosphoglycolate phosphatase.